We begin with the raw amino-acid sequence, 1214 residues long: Peregrin (1214 aa).

The segment at 21 to 47 (YECPVETCRKVYKSYSGIEYHLYHYDH) adopts a C2H2-type zinc-finger fold. Disordered stretches follow at residues 43-87 (YHYD…SPGR) and 118-177 (VVSE…PKLP). The span at 58–67 (LRKHKKKGRQ) shows a compositional bias: basic residues. The interaction with KAT6A and KAT6B stretch occupies residues 59–222 (RKHKKKGRQS…VEYDMDEEDY (164 aa)). Residues 74–85 (QSPSPSEVSQSP) show a composition bias toward low complexity. Over residues 119 to 130 (VSEDEEAPEEAP) the composition is skewed to acidic residues. S120 is modified (phosphoserine). K147 carries the N6-acetyllysine modification. Basic residues predominate over residues 148–167 (SGKHKNKEKRKDSNHHHHHN). S238 is modified (phosphoserine). The PHD-type 1 zinc finger occupies 273-323 (DAVCCICNDGECQNSNVILFCDMCNLAVHQECYGVPYIPEGQWLCRRCLQS). A C2HC pre-PHD-type zinc finger spans residues 327 to 360 (AVDCALCPNKGGAFKQTDDGRWAHVVCALWIPEV). A PHD-type 2 zinc finger spans residues 384-448 (LTCYICKQRG…RKTAYCDIHT (65 aa)). Positions 448-489 (TPPGSARRLPALSHSEGEEDEDEEEDEGKGWSSEKVKKAKAK) are disordered. S460 and S462 each carry phosphoserine. Over residues 464 to 474 (GEEDEDEEEDE) the composition is skewed to acidic residues. The tract at residues 501–821 (LAEKRAAAPV…IKKEMTALRR (321 aa)) is interaction with MEAF6 and ING5. The segment at 543–1079 (YWTLKRQSRN…RGAGWLSEDE (537 aa)) is required for RUNX1 and RUNX2 transcriptional activation. Position 580 is an N6-acetyllysine (K580). In terms of domain architecture, Bromo spans 628 to 732 (MQLTPFLILL…EQGGAVLRQA (105 aa)). The tract at residues 819–1062 (LRRKLAHQRE…VGTGRGVGHS (244 aa)) is disordered. Residues 825-838 (HQRETGRDGPERHG) show a composition bias toward basic and acidic residues. At T858 the chain carries Phosphothreonine. Residues 858-871 (TDSAAEESSSQETS) are compositionally biased toward low complexity. Phosphoserine is present on residues S860, S917, S922, and S926. Over residues 993–1021 (SLPRSSSDSESSSSSSSSAASDRTSTTPS) the composition is skewed to low complexity. S1076 is modified (phosphoserine). The 84-residue stretch at 1085–1168 (ALDLVWAKCR…RTKLVPLGVN (84 aa)) folds into the PWWP domain. The residue at position 1187 (S1187) is a Phosphoserine.

As to quaternary structure, component of some HBO1 complex composed of KAT7/HBO1, MEAF6, ING5, and BRPF1. Component of the MOZ/MORF complex composed at least of ING5, KAT6A, KAT6B, MEAF6 and one of BRPF1, BRD1/BRPF2 and BRPF3. Interacts (via PHD-type zinc finger domains) with unmethylated histone H3 at 'Lys-4' (H3K4me0). Interacts with trimethylated 'Lys-36' of histone H3 (H3K36me3). Interacts with ING5; interaction directs BRPF1 to H4K4me3-enriched chromatin at the 5' of active genes. Interacts with KAT7. Post-translationally, acetylated by KAT6A. High levels in testis.

It is found in the nucleus. The protein localises to the chromosome. The protein resides in the cytoplasm. Its function is as follows. Scaffold subunit of various histone acetyltransferase (HAT) complexes, such as the MOZ/MORF and HBO1 complexes, which have a histone H3 acetyltransferase activity. Plays a key role in HBO1 complex by directing KAT7/HBO1 specificity towards histone H3 'Lys-14' acetylation (H3K14ac). Some HAT complexes preferentially mediate histone H3 'Lys-23' (H3K23ac) acetylation. Positively regulates the transcription of RUNX1 and RUNX2. The chain is Peregrin from Homo sapiens (Human).